Here is a 220-residue protein sequence, read N- to C-terminus: Translation initiation factor 6 (220 aa).

It belongs to the eIF-6 family.

In terms of biological role, binds to the 50S ribosomal subunit and prevents its association with the 30S ribosomal subunit to form the 70S initiation complex. This chain is Translation initiation factor 6, found in Methanoculleus marisnigri (strain ATCC 35101 / DSM 1498 / JR1).